Consider the following 281-residue polypeptide: Probable endonuclease 4 (281 aa).

Zn(2+) is bound by residues His70, His110, Glu146, Asp180, His183, His217, Asp230, His232, and Glu262.

This sequence belongs to the AP endonuclease 2 family. Requires Zn(2+) as cofactor.

The enzyme catalyses Endonucleolytic cleavage to 5'-phosphooligonucleotide end-products.. Endonuclease IV plays a role in DNA repair. It cleaves phosphodiester bonds at apurinic or apyrimidinic (AP) sites, generating a 3'-hydroxyl group and a 5'-terminal sugar phosphate. This is Probable endonuclease 4 from Nitratiruptor sp. (strain SB155-2).